The chain runs to 640 residues: Putative GTPase-activating protein C1620.12c (640 aa).

The tract at residues Gln96–Ile120 is disordered. Positions Ser109–Ile120 are enriched in low complexity. Residues Cys215–Gly408 enclose the Rab-GAP TBC domain. Residues Arg500–Glu636 are a coiled coil.

This sequence belongs to the GYP5 family.

It is found in the nucleus. The protein localises to the cytoplasm. In Schizosaccharomyces pombe (strain 972 / ATCC 24843) (Fission yeast), this protein is Putative GTPase-activating protein C1620.12c.